The following is a 546-amino-acid chain: Carotenoid 9,10(9',10')-cleavage dioxygenase (546 aa).

Fe cation contacts are provided by His-226, His-274, His-340, and His-530.

The protein belongs to the carotenoid oxygenase family. Fe(2+) is required as a cofactor. In vegetative and floral tissues.

It localises to the cytoplasm. It catalyses the reaction all-trans-zeaxanthin + 2 O2 = 4,9-dimethyldodeca-2,4,6,8,10-pentaenedial + 2 (3R)-hydroxy-beta-ionone. In terms of biological role, cleaves a variety of carotenoids symmetrically at both the 9-10 and 9'-10' double bonds. Catalyzes the formation of 4,9-dimethyldodeca-2,4,6,8,10-pentaene-1,12-dialdehyde and probably hydroxydihydro-beta-ionone from zeaxanthin. The protein is Carotenoid 9,10(9',10')-cleavage dioxygenase (CCD) of Crocus sativus (Saffron).